The chain runs to 696 residues: Solute carrier family 53 member 1 (696 aa).

Residues methionine 1–proline 228 lie on the Cytoplasmic side of the membrane. In terms of domain architecture, SPX spans lysine 2 to glycine 224. Residues lysine 158 to lysine 165 are important for inositol polyphosphate binding. The chain crosses the membrane as a helical span at residues alanine 229 to leucine 259. Residues glutamate 260–serine 264 lie on the Extracellular side of the membrane. A helical membrane pass occupies residues isoleucine 265–glycine 296. The Cytoplasmic portion of the chain corresponds to valine 297 to serine 309. The helical transmembrane segment at asparagine 310–alanine 337 threads the bilayer. The Extracellular portion of the chain corresponds to proline 338–proline 343. Residues threonine 344–threonine 365 form a helical membrane-spanning segment. Residues phenylalanine 366 to threonine 383 constitute an intramembrane region (helical). Residues alanine 384–lysine 388 are Cytoplasmic-facing. Residues valine 389 to lysine 422 form a discontinuously helical membrane-spanning segment. Residues aspartate 398 and asparagine 401 each contribute to the phosphate site. At tryptophan 423–leucine 429 the chain is on the extracellular side. A discontinuously helical transmembrane segment spans residues leucine 430–lysine 471. The EXS domain occupies isoleucine 439–glutamate 643. Residue arginine 472 is a topological domain, cytoplasmic. Residues alanine 473–glycine 503 traverse the membrane as a helical segment. Phosphate-binding residues include lysine 482 and tyrosine 483. The Extracellular portion of the chain corresponds to histidine 504–aspartate 506. A helical membrane pass occupies residues threonine 507–tryptophan 534. At glycine 535–tyrosine 553 the chain is on the cytoplasmic side. A discontinuously helical membrane pass occupies residues proline 554–leucine 585. Arginine 570 is a binding site for phosphate. Residues proline 586–histidine 587 are Extracellular-facing. Residues serine 588–valine 626 traverse the membrane as a helical segment. 2 residues coordinate phosphate: arginine 603 and arginine 604. The Cytoplasmic segment spans residues arginine 627 to threonine 696. Serine 668 is subject to Phosphoserine. Positions arginine 673–threonine 696 are disordered. The residue at position 690 (threonine 690) is a Phosphothreonine.

The protein belongs to the SYG1 (TC 2.A.94) family. Homodimer. Widely expressed. Detected in spleen, lymph node, thymus, leukocytes, bone marrow, heart, kidney, pancreas and skeletal muscle.

The protein localises to the cell membrane. The catalysed reaction is phosphate(in) = phosphate(out). With respect to regulation, allosterically activated by inositol hexakisphosphate (Ins6P). Inorganic ion transporter that mediates phosphate ion export across plasma membrane. Plays a major role in phosphate homeostasis, preventing intracellular phosphate accumulation and possible calcium phosphate precipitation, ultimately preserving calcium signaling. Binds inositol hexakisphosphate (Ins6P) and similar inositol polyphosphates, such as 5-diphospho-inositol pentakisphosphate (5-InsP7), which are important intracellular signaling molecules involved in regulation of phosphate flux. The protein is Solute carrier family 53 member 1 of Homo sapiens (Human).